The sequence spans 164 residues: Aspartic proteinase nepenthesin-1 (164 aa).

The Peptidase A1 domain occupies 17–164 (YLMXLSIGTP…VSFVSAQCGA (148 aa)). Residue aspartate 35 is part of the active site. Asparagine 93 is a glycosylation site (N-linked (GlcNAc...) asparagine).

This sequence belongs to the peptidase A1 family. As to expression, parenchymal cells surrounding the secretory glands.

The protein localises to the secreted. The catalysed reaction is Similar to pepsin, but also cleaves on either side of Asp and at Lys-|-Arg.. With respect to regulation, inhibited by pepstatin and by diazoacetyl-D,L-norleucine methyl ester (DAN) in the presence of Cu(2+) ions. Functionally, extracellular proteinase found in the pitcher fluid of carnivorous plants. Digest prey for nitrogen uptake. This Nepenthes distillatoria (Pitcher plant) protein is Aspartic proteinase nepenthesin-1.